The chain runs to 368 residues: Lipoyl synthase, chloroplastic (368 aa).

Disordered regions lie at residues 1–30 and 42–61; these read MQSSLARPLRPPVLAGCGGRRGHGAPRGSV and PTVGTASRAPAGPYTGRDPE. Positions 94, 99, 105, 131, 135, 138, and 346 each coordinate [4Fe-4S] cluster. Residues 114-335 form the Radical SAM core domain; that stretch reads GEGDGIATAT…KEYGESVGFR (222 aa).

It belongs to the radical SAM superfamily. Lipoyl synthase family. [4Fe-4S] cluster serves as cofactor.

It is found in the plastid. The protein localises to the chloroplast. The catalysed reaction is [[Fe-S] cluster scaffold protein carrying a second [4Fe-4S](2+) cluster] + N(6)-octanoyl-L-lysyl-[protein] + 2 oxidized [2Fe-2S]-[ferredoxin] + 2 S-adenosyl-L-methionine + 4 H(+) = [[Fe-S] cluster scaffold protein] + N(6)-[(R)-dihydrolipoyl]-L-lysyl-[protein] + 4 Fe(3+) + 2 hydrogen sulfide + 2 5'-deoxyadenosine + 2 L-methionine + 2 reduced [2Fe-2S]-[ferredoxin]. It functions in the pathway protein modification; protein lipoylation via endogenous pathway; protein N(6)-(lipoyl)lysine from octanoyl-[acyl-carrier-protein]: step 2/2. Its function is as follows. Catalyzes the radical-mediated insertion of two sulfur atoms into the C-6 and C-8 positions of the octanoyl moiety bound to the lipoyl domains of lipoate-dependent enzymes, thereby converting the octanoylated domains into lipoylated derivatives. The protein is Lipoyl synthase, chloroplastic of Sorghum bicolor (Sorghum).